Reading from the N-terminus, the 172-residue chain is Large ribosomal subunit protein eL20A (172 aa).

At Ser32 the chain carries Phosphoserine. Residues Lys125, Lys131, and Lys149 each participate in a glycyl lysine isopeptide (Lys-Gly) (interchain with G-Cter in ubiquitin) cross-link.

It belongs to the eukaryotic ribosomal protein eL20 family. As to quaternary structure, component of the large ribosomal subunit (LSU). Mature yeast ribosomes consist of a small (40S) and a large (60S) subunit. The 40S small subunit contains 1 molecule of ribosomal RNA (18S rRNA) and 33 different proteins (encoded by 57 genes). The large 60S subunit contains 3 rRNA molecules (25S, 5.8S and 5S rRNA) and 46 different proteins (encoded by 81 genes). eL20 forms multiple interactions with RNA and proteins in the central protuberance, connecting components of core functional centers that are located far apart.

It is found in the cytoplasm. Component of the ribosome, a large ribonucleoprotein complex responsible for the synthesis of proteins in the cell. The small ribosomal subunit (SSU) binds messenger RNAs (mRNAs) and translates the encoded message by selecting cognate aminoacyl-transfer RNA (tRNA) molecules. The large subunit (LSU) contains the ribosomal catalytic site termed the peptidyl transferase center (PTC), which catalyzes the formation of peptide bonds, thereby polymerizing the amino acids delivered by tRNAs into a polypeptide chain. The nascent polypeptides leave the ribosome through a tunnel in the LSU and interact with protein factors that function in enzymatic processing, targeting, and the membrane insertion of nascent chains at the exit of the ribosomal tunnel. The protein is Large ribosomal subunit protein eL20A of Saccharomyces cerevisiae (strain ATCC 204508 / S288c) (Baker's yeast).